Consider the following 889-residue polypeptide: Voltage-gated potassium channel KCNC3 (889 aa).

The tract at residues 1–80 (MLSSVCVWSF…CSGLPAVAMG (80 aa)) is important for normal N-type inactivation. Over 1-291 (MLSSVCVWSF…EDPYSSRAAR (291 aa)) the chain is Cytoplasmic. The tract at residues 10–66 (FSGRQGTRKQHSQPAPTPQPPESSPPPLLPPPQQQCAQPGTAASPAGAPLSCGPGGR) is disordered. The span at 24 to 42 (APTPQPPESSPPPLLPPPQ) shows a compositional bias: pro residues. Residues His159, Cys165, Cys186, and Cys187 each contribute to the Zn(2+) site. Residues 202 to 231 (DSFEAPDSSGNANANAGGAHDAGLDDEAGA) are disordered. Residues 211–222 (GNANANAGGAHD) are compositionally biased toward low complexity. A helical membrane pass occupies residues 292 to 310 (YVAFASLFFILISITTFCL). N-linked (GlcNAc...) asparagine glycosylation is present at Asn321. The chain crosses the membrane as a helical span at residues 352–371 (VEGVCVVWFTFEFLMRVTFC). The Cytoplasmic portion of the chain corresponds to 372–380 (PDKVEFLKS). Residues 381–399 (SLNIIDCVAILPFYLEVGL) form a helical membrane-spanning segment. Residues 413 to 435 (FLRVVRFVRILRIFKLTRHFVGL) traverse the membrane as a helical; Voltage-sensor segment. Residues 436 to 448 (RVLGHTLRASTNE) lie on the Cytoplasmic side of the membrane. The helical transmembrane segment at 449–470 (FLLLIIFLALGVLIFATMIYYA) threads the bilayer. Residues Thr504, Leu505, Gly506, and Tyr507 each contribute to the K(+) site. A Selectivity filter motif is present at residues 504–509 (TLGYGD). Residues 519 to 540 (LVGALCALAGVLTIAMPVPVIV) form a helical membrane-spanning segment. Residues 541–889 (NNFGMYYSLA…FPSRHSSPAV (349 aa)) lie on the Cytoplasmic side of the membrane. Disordered stretches follow at residues 557 to 627 (PKKK…LLRG), 691 to 834 (IDQP…PQSL), and 852 to 889 (TLGF…SPAV). At Arg626 the chain carries Omega-N-methylarginine. A phosphoserine mark is found at Ser697 and Ser702. Positions 748–764 (SQAPPASCPTSTPTQQP) are enriched in low complexity. Residue Thr759 is modified to Phosphothreonine. Residues 794–808 (HRSHQPPGKHQRGGR) are compositionally biased toward basic residues.

Belongs to the potassium channel family. C (Shaw) (TC 1.A.1.2) subfamily. Kv3.3/KCNC3 sub-subfamily. As to quaternary structure, homotetramer. Heterotetramer with KCNC1. Interacts (via C-terminus) with HAX1; this interaction modulates channel gating. Identified in a complex with ACTR3, a subunit of the Arp2/3 complex; this interaction is indirect and depends on the presence of HAX1. In terms of processing, N-glycosylated. As to expression, detected on Purkinje cells in the cerebellum molecular layer (at protein level).

It is found in the cell membrane. Its subcellular location is the presynaptic cell membrane. The protein resides in the perikaryon. It localises to the cell projection. The protein localises to the axon. It is found in the dendrite. Its subcellular location is the dendritic spine membrane. The protein resides in the cytoplasm. It localises to the cell cortex. The protein localises to the cytoskeleton. It carries out the reaction K(+)(in) = K(+)(out). In terms of biological role, voltage-gated potassium channel that plays an important role in the rapid repolarization of fast-firing brain neurons. The channel opens in response to the voltage difference across the membrane, forming a potassium-selective channel through which potassium ions pass in accordance with their electrochemical gradient. The channel displays rapid activation and inactivation kinetics. It plays a role in the regulation of the frequency, shape and duration of action potentials in Purkinje cells. Required for normal survival of cerebellar neurons, probably via its role in regulating the duration and frequency of action potentials that in turn regulate the activity of voltage-gated Ca(2+) channels and cellular Ca(2+) homeostasis. Required for normal motor function. Plays a role in the reorganization of the cortical actin cytoskeleton and the formation of actin veil structures in neuronal growth cones via its interaction with HAX1 and the Arp2/3 complex. The protein is Voltage-gated potassium channel KCNC3 of Rattus norvegicus (Rat).